The following is a 121-amino-acid chain: Peptidyl-tRNA hydrolase (121 aa).

The protein belongs to the PTH2 family.

Its subcellular location is the cytoplasm. It catalyses the reaction an N-acyl-L-alpha-aminoacyl-tRNA + H2O = an N-acyl-L-amino acid + a tRNA + H(+). The natural substrate for this enzyme may be peptidyl-tRNAs which drop off the ribosome during protein synthesis. The chain is Peptidyl-tRNA hydrolase from Staphylothermus marinus (strain ATCC 43588 / DSM 3639 / JCM 9404 / F1).